A 393-amino-acid chain; its full sequence is Cobalt-precorrin-5B C(1)-methyltransferase (393 aa).

Residues 1-35 form a disordered region; it reads MSDETRVGEAAEQAATPEKIRKGSARRERGNRTGF. Residues 18–31 are compositionally biased toward basic and acidic residues; that stretch reads EKIRKGSARRERGN.

Belongs to the CbiD family.

The enzyme catalyses Co-precorrin-5B + S-adenosyl-L-methionine = Co-precorrin-6A + S-adenosyl-L-homocysteine. Its pathway is cofactor biosynthesis; adenosylcobalamin biosynthesis; cob(II)yrinate a,c-diamide from sirohydrochlorin (anaerobic route): step 6/10. Its function is as follows. Catalyzes the methylation of C-1 in cobalt-precorrin-5B to form cobalt-precorrin-6A. The polypeptide is Cobalt-precorrin-5B C(1)-methyltransferase (Dechloromonas aromatica (strain RCB)).